A 1052-amino-acid chain; its full sequence is Isoleucine--tRNA ligase (1052 aa).

The 'HIGH' region signature appears at 58–68; it reads PFANGLPHYGH. The 'KMSKS' region motif lies at 627 to 631; that stretch reads KMSKS. Residue Lys-630 participates in ATP binding.

The protein belongs to the class-I aminoacyl-tRNA synthetase family. IleS type 2 subfamily. Monomer. Requires Zn(2+) as cofactor.

The protein resides in the cytoplasm. It carries out the reaction tRNA(Ile) + L-isoleucine + ATP = L-isoleucyl-tRNA(Ile) + AMP + diphosphate. Catalyzes the attachment of isoleucine to tRNA(Ile). As IleRS can inadvertently accommodate and process structurally similar amino acids such as valine, to avoid such errors it has two additional distinct tRNA(Ile)-dependent editing activities. One activity is designated as 'pretransfer' editing and involves the hydrolysis of activated Val-AMP. The other activity is designated 'posttransfer' editing and involves deacylation of mischarged Val-tRNA(Ile). This Corynebacterium diphtheriae (strain ATCC 700971 / NCTC 13129 / Biotype gravis) protein is Isoleucine--tRNA ligase.